The primary structure comprises 1898 residues: Receptor-type tyrosine-protein phosphatase F (1898 aa).

Residues 1–29 (MTPEPAPGRTMVPLVPALVMLGLVAGAHG) form the signal peptide. Over 30 to 1254 (DSKPVFVKVP…QQQEEPELLW (1225 aa)) the chain is Extracellular. Ig-like C2-type domains are found at residues 33 to 123 (PVFV…AKLS), 135 to 224 (PSID…ANLY), and 232 to 314 (PRFS…AQVT). Cysteine 54 and cysteine 107 are joined by a disulfide. 68–77 (KKGKKVSSQR) lines the heparin pocket. N-linked (GlcNAc...) asparagine glycosylation occurs at asparagine 117. A disulfide bridge connects residues cysteine 156 and cysteine 207. N-linked (GlcNAc...) asparagine glycosylation is found at asparagine 250 and asparagine 295. Cysteine 253 and cysteine 298 are oxidised to a cystine. Fibronectin type-III domains are found at residues 321–411 (PPID…TGEQ), 416–510 (PPRR…TQQG), 514–604 (QPAD…TAQS), 609–706 (PPQK…TDED), 711–810 (PPRK…TTGA), 811–905 (VPGR…PEDV), 909–1001 (FPQN…TMPV), and 1005–1089 (FAKN…TAPD). Residues 399–418 (PPSEAVRARTGEQAPSSPPR) are disordered. The segment at 693–713 (GPESSPVLVRTDEDVPSGPPR) is disordered. Asparagine 721 carries an N-linked (GlcNAc...) asparagine glycan. N-linked (GlcNAc...) asparagine glycosylation is found at asparagine 941 and asparagine 957. The chain crosses the membrane as a helical span at residues 1255-1275 (VTGPVLAVILIVLIVIAILLF). The Cytoplasmic segment spans residues 1276–1898 (KRKRTHSPSS…YLGSFDHYAT (623 aa)). Serine 1296 bears the Phosphoserine mark. Tyrosine-protein phosphatase domains lie at 1343-1598 (FSQE…LLEA) and 1630-1889 (MELE…ALEY). Residues aspartate 1507, 1539–1545 (CSAGVGR), and glutamine 1583 contribute to the substrate site. Catalysis depends on cysteine 1539, which acts as the Phosphocysteine intermediate. Cysteine 1830 serves as the catalytic Phosphocysteine intermediate.

Belongs to the protein-tyrosine phosphatase family. Receptor class 2A subfamily. In terms of assembly, interacts with GRIP1. Interacts with PPFIA1, PPFIA2 and PPFIA3. Interacts with INSR.

The protein resides in the membrane. It catalyses the reaction O-phospho-L-tyrosyl-[protein] + H2O = L-tyrosyl-[protein] + phosphate. Possible cell adhesion receptor. It possesses an intrinsic protein tyrosine phosphatase activity (PTPase) and dephosphorylates EPHA2 regulating its activity. In terms of biological role, the first PTPase domain has enzymatic activity, while the second one seems to affect the substrate specificity of the first one. The sequence is that of Receptor-type tyrosine-protein phosphatase F (PTPRF) from Bos taurus (Bovine).